The following is a 651-amino-acid chain: Acetyl-coenzyme A synthetase (651 aa).

CoA is bound by residues 189-192, T311, and N335; that span reads RGGK. ATP contacts are provided by residues 387–389, 411–416, D500, and R515; these read GEP and DTWWQT. S523 is a binding site for CoA. R526 provides a ligand contact to ATP. Mg(2+) is bound by residues V537, H539, and V542. Position 584 (R584) interacts with CoA. N6-acetyllysine is present on K609.

It belongs to the ATP-dependent AMP-binding enzyme family. The cofactor is Mg(2+). Acetylated. Deacetylation by the SIR2-homolog deacetylase activates the enzyme.

It carries out the reaction acetate + ATP + CoA = acetyl-CoA + AMP + diphosphate. In terms of biological role, catalyzes the conversion of acetate into acetyl-CoA (AcCoA), an essential intermediate at the junction of anabolic and catabolic pathways. AcsA undergoes a two-step reaction. In the first half reaction, AcsA combines acetate with ATP to form acetyl-adenylate (AcAMP) intermediate. In the second half reaction, it can then transfer the acetyl group from AcAMP to the sulfhydryl group of CoA, forming the product AcCoA. This Rhizobium leguminosarum bv. trifolii (strain WSM2304) protein is Acetyl-coenzyme A synthetase.